The sequence spans 387 residues: 3-dehydroquinate synthase (387 aa).

Belongs to the archaeal-type DHQ synthase family.

It carries out the reaction 2-amino-2,3,7-trideoxy-D-lyxo-hept-6-ulosonate + NAD(+) + H2O = 3-dehydroquinate + NH4(+) + NADH + H(+). Its function is as follows. Catalyzes the oxidative deamination and cyclization of 2-amino-3,7-dideoxy-D-threo-hept-6-ulosonic acid (ADH) to yield 3-dehydroquinate (DHQ), which is fed into the canonical shikimic pathway of aromatic amino acid biosynthesis. The protein is 3-dehydroquinate synthase of Halobacterium salinarum (strain ATCC 29341 / DSM 671 / R1).